A 147-amino-acid polypeptide reads, in one-letter code: MVHLTGEEKAAVTALWGKVNVDEVGGEALGRLLVVYPWTQRFFESFGDLSTPDAVMSNPKVKAHGKKVLGAFSDGLAHLDNLKGTFAQLSELHCDKLHVDPENFRLLGNVLVCVLAHHFGKEFTPQLQAAYQKVVAGVANALAHKYH.

V2 carries the post-translational modification N-acetylvaline. A Globin domain is found at 3-147 (HLTGEEKAAV…VANALAHKYH (145 aa)). At T13 the chain carries Phosphothreonine. S45 is subject to Phosphoserine. Position 60 is an N6-acetyllysine (K60). A heme b-binding site is contributed by H64. K83 carries the N6-acetyllysine modification. H93 lines the heme b pocket. At C94 the chain carries S-nitrosocysteine. K145 is subject to N6-acetyllysine.

This sequence belongs to the globin family. In terms of assembly, heterotetramer of two alpha chains and two beta chains. In terms of tissue distribution, red blood cells.

Its function is as follows. Involved in oxygen transport from the lung to the various peripheral tissues. The sequence is that of Hemoglobin subunit beta (HBB) from Ateles belzebuth (White-bellied spider monkey).